Reading from the N-terminus, the 539-residue chain is Chaperonin GroEL (539 aa).

Residues 30 to 33 (TLGP), lysine 51, 87 to 91 (DGTTT), glycine 415, and aspartate 495 each bind ATP.

This sequence belongs to the chaperonin (HSP60) family. Forms a cylinder of 14 subunits composed of two heptameric rings stacked back-to-back. Interacts with the co-chaperonin GroES.

Its subcellular location is the cytoplasm. The enzyme catalyses ATP + H2O + a folded polypeptide = ADP + phosphate + an unfolded polypeptide.. Functionally, together with its co-chaperonin GroES, plays an essential role in assisting protein folding. The GroEL-GroES system forms a nano-cage that allows encapsulation of the non-native substrate proteins and provides a physical environment optimized to promote and accelerate protein folding. This chain is Chaperonin GroEL, found in Serratia rubidaea (Serratia marinorubra).